The sequence spans 131 residues: Glycine cleavage system H protein (131 aa).

In terms of domain architecture, Lipoyl-binding spans 24–106 (RVTVGISDHA…YGEGWIFVVE (83 aa)). Lys65 carries the N6-lipoyllysine modification.

Belongs to the GcvH family. As to quaternary structure, the glycine cleavage system is composed of four proteins: P, T, L and H. (R)-lipoate serves as cofactor.

In terms of biological role, the glycine cleavage system catalyzes the degradation of glycine. The H protein shuttles the methylamine group of glycine from the P protein to the T protein. In Xanthomonas euvesicatoria pv. vesicatoria (strain 85-10) (Xanthomonas campestris pv. vesicatoria), this protein is Glycine cleavage system H protein.